A 569-amino-acid chain; its full sequence is Urease subunit alpha (569 aa).

Positions 131–569 (GGIDTHIHFI…LPLAQRYLLL (439 aa)) constitute a Urease domain. Positions 136, 138, and 219 each coordinate Ni(2+). N6-carboxylysine is present on K219. H221 provides a ligand contact to substrate. Ni(2+)-binding residues include H248 and H274. The active-site Proton donor is H322. A Ni(2+)-binding site is contributed by D362.

This sequence belongs to the metallo-dependent hydrolases superfamily. Urease alpha subunit family. As to quaternary structure, heterotrimer of UreA (gamma), UreB (beta) and UreC (alpha) subunits. Three heterotrimers associate to form the active enzyme. The cofactor is Ni cation. Carboxylation allows a single lysine to coordinate two nickel ions.

The protein localises to the cytoplasm. It carries out the reaction urea + 2 H2O + H(+) = hydrogencarbonate + 2 NH4(+). It functions in the pathway nitrogen metabolism; urea degradation; CO(2) and NH(3) from urea (urease route): step 1/1. The chain is Urease subunit alpha from Parasynechococcus marenigrum (strain WH8102).